Consider the following 650-residue polypeptide: MESSGPSSCHSAARRPLHSAQAVDVASASSFRAFEILHLHLDLRAEFGPPGPGPGSRGLNGKATLELRCLLPEGASELRLDSHSCLEVMAATLLRGQPGDQQQLTEPVPFHTQPFSHYGQALCVVFPKPCCAAERFRLELTYRVGEGPGVCWLAPEQTAGKKKPFVYTQGQAVLNRAFFPCFDTPAVKCTYSALVEVPDGFTAVMSASTWERRGPNKFFFQMSQPIPSYLIALAIGDLASAEVGPRSRVWAEPCLIEAAKEEYNGVIEEFLATGEKLFGPYVWGRYDLLFMPPSFPFGGMENPCLTFVTPCLLAGDRSLADVIIHEISHSWFGNLVTNANWGEFWLNEGFTMYAQRRISTILFGAAYTCLEAATGRALLRQHMDVSGEENPLNKLRVKIEPGVDPDDTYNETPYEKGYCFVSYLAHLVGDQEQFDKFLKAYVDEFKFQSILAEDFLEFYLEYFPELKKKGVDSIPGFEFNRWLNTPGWPPYLPDLSPGDSLMKPAEELAELWAASEPDMQAIEAVAISTWKTYQLVYFLDKILQKSPLPPGNVKKLGETYPKISNAQNAELRLRWGQIILKNDHQEEFWKVKDFLQSQGKQKYTLPLYHAMMGGSEMARTLAKETFSATASQLHSNVVNYVQQILAPKGS.

Phosphoserine is present on Ser7. 298-302 (GGMEN) contacts substrate. Residue His325 participates in Zn(2+) binding. Glu326 serves as the catalytic Proton acceptor. Positions 329 and 348 each coordinate Zn(2+). Lys446 carries the N6-acetyllysine modification.

The protein belongs to the peptidase M1 family. As to quaternary structure, monomer. It depends on Zn(2+) as a cofactor. In terms of tissue distribution, widely expressed.

It localises to the secreted. The enzyme catalyses Release of N-terminal Arg and Lys from oligopeptides when P1' is not Pro. Also acts on arylamides of Arg and Lys.. Functionally, exopeptidase which selectively removes arginine and/or lysine residues from the N-terminus of several peptide substrates including Arg(0)-Leu-enkephalin, Arg(0)-Met-enkephalin and Arg(-1)-Lys(0)-somatostatin-14. Can hydrolyze leukotriene A4 (LTA-4) into leukotriene B4 (LTB-4). The protein is Aminopeptidase B (Rnpep) of Rattus norvegicus (Rat).